The chain runs to 173 residues: Nicotinamide-nucleotide adenylyltransferase (173 aa).

The protein belongs to the archaeal NMN adenylyltransferase family.

Its subcellular location is the cytoplasm. The enzyme catalyses beta-nicotinamide D-ribonucleotide + ATP + H(+) = diphosphate + NAD(+). It functions in the pathway cofactor biosynthesis; NAD(+) biosynthesis; NAD(+) from nicotinamide D-ribonucleotide: step 1/1. This is Nicotinamide-nucleotide adenylyltransferase (ffdC) from Methanolobus tindarius.